The primary structure comprises 626 residues: MSLAFNLRVIPFSGHTIQSRRGLFPVHESPMITTKPFAAVKCSLTTSTDLMGKIKEKFNGKVHTSLPAITTHSADTPSNLCIIDTLQRLGVDRYFQSEIDSILDDTYRLWQLKKEDIFSDITTHAMAFRLLRVKGYQVSSEELAPYADQEHVNLQEIDVPTVIELYRAAQERVTEEDSTLKKLYVWTSTFLKQQLLTDAIPDKKLHEQVDYYLKNYHGILDRMGVRRSLDLYDVGHYKTLKAADGFSNLCNEDFLAFARQDFNISQAQHQKELQQLQRWYSDCRLDTLKFGRDVVRVSNFLTSAMSGDPELSDVRLAFAKHIVLVTRIDDFFDHGGSKEESYKILELVKEWKEKPAGEYGSEEVEILFTAVYNTVNELAEMAHIEQGRSVKDLLIKLWVEILSMFKIELDTWSDDTALTLDEYLSSSWVSIGCRICILISMQFLGVKLTDEMLLSEECTDLCRHVSMVDRLLNDVQTFEKERKENTGNSVSLLLAAHKDERAINEEEAITKAKDLAEYNRRKLMQIVYKTGTIFPRKCKDMFLKVCRIGCYLYSSGDEFTTPQQMMEDMKSLVYEPLTIHPPEANNVVGKKTELCQQLVKPYVCHTFCKKYTVSRPSNVMMTCYID.

The transit peptide at 1-51 (MSLAFNLRVIPFSGHTIQSRRGLFPVHESPMITTKPFAAVKCSLTTSTDLM) directs the protein to the chloroplast. The Mg(2+) site is built by D329, D333, N473, and E481. Residues 329–333 (DDFFD) carry the DDXXD motif motif.

Belongs to the terpene synthase family. It depends on Mg(2+) as a cofactor. As to expression, highly expressed in roots, and, at low levels, in stems and leaves.

The protein localises to the plastid. It localises to the chloroplast. The enzyme catalyses (+)-copalyl diphosphate = miltiradiene + diphosphate. The protein operates within secondary metabolite biosynthesis; terpenoid biosynthesis. Involved in the biosynthesis of ent-kaurene diterpenoids natural products such as oridonin, miltiradiene, eriocalyxin B and nezukol, known to exhibit antitumor, anti-inflammatory and antibacterial activities. Catalyzes the conversion of (+)-copalyl diphosphate ((+)-CPP) to miltiradiene. This Isodon rubescens (Rabdosia rubescens) protein is Miltiradiene synthase KSL1, chloroplastic.